We begin with the raw amino-acid sequence, 156 residues long: Cyanate hydratase (156 aa).

Catalysis depends on residues Arg96, Glu99, and Ser122.

It belongs to the cyanase family.

It carries out the reaction cyanate + hydrogencarbonate + 3 H(+) = NH4(+) + 2 CO2. Functionally, catalyzes the reaction of cyanate with bicarbonate to produce ammonia and carbon dioxide. In Photorhabdus laumondii subsp. laumondii (strain DSM 15139 / CIP 105565 / TT01) (Photorhabdus luminescens subsp. laumondii), this protein is Cyanate hydratase.